Here is a 161-residue protein sequence, read N- to C-terminus: Ribonuclease P protein component 2 (161 aa).

The protein belongs to the eukaryotic/archaeal RNase P protein component 2 family. In terms of assembly, consists of a catalytic RNA component and at least 4-5 protein subunits.

The protein resides in the cytoplasm. It catalyses the reaction Endonucleolytic cleavage of RNA, removing 5'-extranucleotides from tRNA precursor.. Its function is as follows. Part of ribonuclease P, a protein complex that generates mature tRNA molecules by cleaving their 5'-ends. The polypeptide is Ribonuclease P protein component 2 (Haloarcula marismortui (strain ATCC 43049 / DSM 3752 / JCM 8966 / VKM B-1809) (Halobacterium marismortui)).